Reading from the N-terminus, the 316-residue chain is MDVLLANPRGFCAGVDRAIEIVKRAIETLGAPIYVRHEVVHNRFVVDDLKQRGAIFVEELDEVPDDATVIFSAHGVSQAVRVEAERRGLKVFDATCPLVTKVHFEVARHCRAGRDVVLIGHAGHPEVEGTMGQWSRERGPGQIYLVEDIEQVATLQVRQPESLAYTTQTTLSVDDTMGIIEALRVRYPAMQGPKHDDICYATQNRQDAVRDLARQCDLVLVVGSPNSSNSNRLSELARRDGVESYLIDNASEIDPAWIVGKQHIGLTAGASAPQVLVDGVLARLRELGANGVSELAGEPESMVFALPKELRLRLVS.

Cys-12 contacts [4Fe-4S] cluster. (2E)-4-hydroxy-3-methylbut-2-enyl diphosphate-binding residues include His-41 and His-74. The dimethylallyl diphosphate site is built by His-41 and His-74. Isopentenyl diphosphate is bound by residues His-41 and His-74. Residue Cys-96 coordinates [4Fe-4S] cluster. His-124 lines the (2E)-4-hydroxy-3-methylbut-2-enyl diphosphate pocket. Position 124 (His-124) interacts with dimethylallyl diphosphate. An isopentenyl diphosphate-binding site is contributed by His-124. The active-site Proton donor is Glu-126. Position 169 (Thr-169) interacts with (2E)-4-hydroxy-3-methylbut-2-enyl diphosphate. Residue Cys-199 coordinates [4Fe-4S] cluster. Ser-227, Ser-228, Asn-229, and Ser-271 together coordinate (2E)-4-hydroxy-3-methylbut-2-enyl diphosphate. Ser-227, Ser-228, Asn-229, and Ser-271 together coordinate dimethylallyl diphosphate. Isopentenyl diphosphate is bound by residues Ser-227, Ser-228, Asn-229, and Ser-271.

Belongs to the IspH family. [4Fe-4S] cluster is required as a cofactor.

It carries out the reaction isopentenyl diphosphate + 2 oxidized [2Fe-2S]-[ferredoxin] + H2O = (2E)-4-hydroxy-3-methylbut-2-enyl diphosphate + 2 reduced [2Fe-2S]-[ferredoxin] + 2 H(+). The catalysed reaction is dimethylallyl diphosphate + 2 oxidized [2Fe-2S]-[ferredoxin] + H2O = (2E)-4-hydroxy-3-methylbut-2-enyl diphosphate + 2 reduced [2Fe-2S]-[ferredoxin] + 2 H(+). The protein operates within isoprenoid biosynthesis; dimethylallyl diphosphate biosynthesis; dimethylallyl diphosphate from (2E)-4-hydroxy-3-methylbutenyl diphosphate: step 1/1. Its pathway is isoprenoid biosynthesis; isopentenyl diphosphate biosynthesis via DXP pathway; isopentenyl diphosphate from 1-deoxy-D-xylulose 5-phosphate: step 6/6. Catalyzes the conversion of 1-hydroxy-2-methyl-2-(E)-butenyl 4-diphosphate (HMBPP) into a mixture of isopentenyl diphosphate (IPP) and dimethylallyl diphosphate (DMAPP). Acts in the terminal step of the DOXP/MEP pathway for isoprenoid precursor biosynthesis. The sequence is that of 4-hydroxy-3-methylbut-2-enyl diphosphate reductase from Xanthomonas campestris pv. campestris (strain ATCC 33913 / DSM 3586 / NCPPB 528 / LMG 568 / P 25).